Reading from the N-terminus, the 106-residue chain is COX assembly mitochondrial protein homolog (106 aa).

N-acetylalanine is present on Ala2. The 44-residue stretch at 28–71 (RERCSEQVEDFTRCCKDSGILMVLKCRKENSALKDCLTAYYNDP) folds into the CHCH domain. 2 short sequence motifs (cx9C motif) span residues 31 to 41 (CSEQVEDFTRC) and 53 to 63 (CRKENSALKDC). Disulfide bonds link Cys31–Cys63 and Cys41–Cys53.

The protein belongs to the CMC family. Component of the MITRAC (mitochondrial translation regulation assembly intermediate of cytochrome c oxidase complex) complex, the core components of this complex being COA3/MITRAC12 and COX14.

It localises to the mitochondrion. In terms of biological role, component of the MITRAC (mitochondrial translation regulation assembly intermediate of cytochrome c oxidase complex) complex, that regulates cytochrome c oxidase assembly. This chain is COX assembly mitochondrial protein homolog (Cmc1), found in Mus musculus (Mouse).